The following is a 260-amino-acid chain: Serine hydroxymethyltransferase (260 aa).

Position 60 is an N6-(pyridoxal phosphate)lysine (Lys-60).

It belongs to the SHMT family. Homodimer. The cofactor is pyridoxal 5'-phosphate.

It localises to the cytoplasm. The enzyme catalyses (6R)-5,10-methylene-5,6,7,8-tetrahydrofolate + glycine + H2O = (6S)-5,6,7,8-tetrahydrofolate + L-serine. It functions in the pathway one-carbon metabolism; tetrahydrofolate interconversion. Its pathway is amino-acid biosynthesis; glycine biosynthesis; glycine from L-serine: step 1/1. In terms of biological role, catalyzes the reversible interconversion of serine and glycine with tetrahydrofolate (THF) serving as the one-carbon carrier. This reaction serves as the major source of one-carbon groups required for the biosynthesis of purines, thymidylate, methionine, and other important biomolecules. Also exhibits THF-independent aldolase activity toward beta-hydroxyamino acids, producing glycine and aldehydes, via a retro-aldol mechanism. This Corynebacterium sp. (strain P-1) protein is Serine hydroxymethyltransferase.